A 415-amino-acid chain; its full sequence is Peptide chain release factor subunit 1-1 (415 aa).

It belongs to the eukaryotic release factor 1 family. In terms of assembly, heterodimer of two subunits, one of which binds GTP.

It is found in the cytoplasm. Functionally, directs the termination of nascent peptide synthesis (translation) in response to the termination codons UAA, UAG and UGA. This Methanosarcina acetivorans (strain ATCC 35395 / DSM 2834 / JCM 12185 / C2A) protein is Peptide chain release factor subunit 1-1.